A 96-amino-acid chain; its full sequence is Putative septation protein SpoVG (96 aa).

The protein belongs to the SpoVG family.

In terms of biological role, could be involved in septation. This Geobacillus sp. (strain WCH70) protein is Putative septation protein SpoVG.